A 456-amino-acid chain; its full sequence is Yersinopine synthase (456 aa).

NADP(+)-binding positions include 12–15, 35–40, and threonine 154; these read AGPA and NRPSTK. Histidine 242 acts as the Proton donor/acceptor in catalysis.

The protein belongs to the staphylopine dehydrogenase family. In terms of assembly, homodimer.

It catalyses the reaction yersinopine + NADP(+) + H2O = (2S)-2-amino-4-{[(1S)-1-carboxy-2-(1H-imidazol-4-yl)ethyl]amino}butanoate + pyruvate + NADPH + H(+). Functionally, catalyzes the NADPH-dependent reductive condensation of pyruvate to the intermediate formed by the adjacently encoded enzyme y2836, namely (2S)-2-amino-4-{[(1S)-1-carboxy-2-(1H-imidazol-4-yl)ethyl]amino}butanoate, leading to the production of yersinopine. This is the last step in the biosynthesis of the metallophore yersinopine, which is involved in metal acquisition and thus enables bacterial growth inside the host, where metal access is limited. Therefore, this enzyme probably contributes to Yersinia virulence. Cannot use alpha-ketoglutarate in place of pyruvate, and displays only poor efficiency with oxaloacetate and glyoxylate. The protein is Yersinopine synthase of Yersinia pestis.